We begin with the raw amino-acid sequence, 889 residues long: Cytoplasmic aconitate hydratase (889 aa).

Residues Q86 and D205–H207 each bind substrate. Residues C437, C503, and C506 each contribute to the [4Fe-4S] cluster site. Residues R536, R541, R699, and S779–R780 contribute to the substrate site.

This sequence belongs to the aconitase/IPM isomerase family. As to quaternary structure, interacts (when associated with the 4Fe-4S) with FBXL5. Interacts with frataxin(81-210). The cofactor is [4Fe-4S] cluster.

The protein localises to the cytoplasm. It localises to the cytosol. It carries out the reaction citrate = D-threo-isocitrate. In terms of biological role, bifunctional iron sensor that switches between 2 activities depending on iron availability. Iron deprivation, promotes its mRNA binding activity through which it regulates the expression of genes involved in iron uptake, sequestration and utilization. Binds to iron-responsive elements (IRES) in the untranslated region of target mRNAs preventing for instance the translation of ferritin and aminolevulinic acid synthase and stabilizing the transferrin receptor mRNA. Its function is as follows. Conversely, when cellular iron levels are high, binds a 4Fe-4S cluster which precludes RNA binding activity and promotes the aconitase activity, the isomerization of citrate to isocitrate via cis-aconitate. The polypeptide is Cytoplasmic aconitate hydratase (Aco1) (Mus musculus (Mouse)).